We begin with the raw amino-acid sequence, 227 residues long: Cytidylate kinase (227 aa).

12–20 (GPSGAGKGT) contributes to the ATP binding site.

This sequence belongs to the cytidylate kinase family. Type 1 subfamily.

It localises to the cytoplasm. The enzyme catalyses CMP + ATP = CDP + ADP. The catalysed reaction is dCMP + ATP = dCDP + ADP. In Xanthomonas oryzae pv. oryzae (strain PXO99A), this protein is Cytidylate kinase.